We begin with the raw amino-acid sequence, 284 residues long: Short-chain dehydrogenase RED1 (284 aa).

The NADP(+) site is built by isoleucine 11, threonine 37, aspartate 58, asparagine 86, tyrosine 151, lysine 155, valine 184, and threonine 186. Catalysis depends on tyrosine 151, which acts as the Proton acceptor. The Lowers pKa of active site Tyr role is filled by lysine 155.

It belongs to the short-chain dehydrogenases/reductases (SDR) family.

It participates in polyketide biosynthesis. Functionally, short-chain dehydrogenase; part of the gene cluster that mediates the biosynthesis of pyriculol and pyriculariol, two heptaketides that induce lesion formation upon application on rice leaves but are dispensable for pathogenicity. The highly reducing polyketide synthase synthesizes the heptaketide backbone of pyriculol and pyriculariol. Pyriculol and pyriculariol contain several hydroxyl moieties and double bonds, so it can be assumed that several reduction steps occur during biosynthesis. These reactions could be executed by PKS19 itself or partly by the tailoring enzymes OXR1, OXR2, RED1, RED2 or RED3, identified within the cluster. The FAD-linked oxidoreductase OXR1 is the only tailoring enzyme for which the function has been determined yet, and is involved in the oxidation of dihydropyriculol and dihydropyriculariol into pyriculol and pyriculariol, respectively. The chain is Short-chain dehydrogenase RED1 from Pyricularia oryzae (strain 70-15 / ATCC MYA-4617 / FGSC 8958) (Rice blast fungus).